A 147-amino-acid polypeptide reads, in one-letter code: Prefoldin subunit alpha (147 aa).

This sequence belongs to the prefoldin alpha subunit family. As to quaternary structure, heterohexamer of two alpha and four beta subunits.

It localises to the cytoplasm. Functionally, molecular chaperone capable of stabilizing a range of proteins. Seems to fulfill an ATP-independent, HSP70-like function in archaeal de novo protein folding. The sequence is that of Prefoldin subunit alpha from Saccharolobus islandicus (strain Y.N.15.51 / Yellowstone #2) (Sulfolobus islandicus).